The chain runs to 471 residues: Histidinol dehydrogenase (471 aa).

3 residues coordinate NAD(+): tyrosine 139, glutamine 204, and asparagine 236. Positions 259, 281, and 284 each coordinate substrate. Zn(2+) is bound by residues glutamine 281 and histidine 284. Active-site proton acceptor residues include glutamate 350 and histidine 351. 4 residues coordinate substrate: histidine 351, aspartate 384, glutamate 438, and histidine 443. Aspartate 384 lines the Zn(2+) pocket. Histidine 443 serves as a coordination point for Zn(2+).

This sequence belongs to the histidinol dehydrogenase family. Zn(2+) serves as cofactor.

It catalyses the reaction L-histidinol + 2 NAD(+) + H2O = L-histidine + 2 NADH + 3 H(+). Its pathway is amino-acid biosynthesis; L-histidine biosynthesis; L-histidine from 5-phospho-alpha-D-ribose 1-diphosphate: step 9/9. Functionally, catalyzes the sequential NAD-dependent oxidations of L-histidinol to L-histidinaldehyde and then to L-histidine. In Bifidobacterium longum (strain NCC 2705), this protein is Histidinol dehydrogenase.